The primary structure comprises 332 residues: Methionyl-tRNA formyltransferase (332 aa).

(6S)-5,6,7,8-tetrahydrofolate is bound at residue 124–127 (SLLP).

The protein belongs to the Fmt family.

The catalysed reaction is L-methionyl-tRNA(fMet) + (6R)-10-formyltetrahydrofolate = N-formyl-L-methionyl-tRNA(fMet) + (6S)-5,6,7,8-tetrahydrofolate + H(+). Attaches a formyl group to the free amino group of methionyl-tRNA(fMet). The formyl group appears to play a dual role in the initiator identity of N-formylmethionyl-tRNA by promoting its recognition by IF2 and preventing the misappropriation of this tRNA by the elongation apparatus. The protein is Methionyl-tRNA formyltransferase of Polynucleobacter asymbioticus (strain DSM 18221 / CIP 109841 / QLW-P1DMWA-1) (Polynucleobacter necessarius subsp. asymbioticus).